The chain runs to 305 residues: Dihydroorotate dehydrogenase B (NAD(+)), catalytic subunit (305 aa).

FMN contacts are provided by residues Ser-23 and 47–48 (KG). Substrate is bound by residues Lys-47 and 71–75 (NAIGL). The FMN site is built by Asn-101 and Asn-129. Asn-129 is a binding site for substrate. The active-site Nucleophile is the Cys-132. FMN contacts are provided by Lys-167 and Ile-193. 194–195 (NT) lines the substrate pocket. FMN is bound by residues Gly-219, 245–246 (GG), and 267–268 (GT).

The protein belongs to the dihydroorotate dehydrogenase family. Type 1 subfamily. Heterotetramer of 2 PyrK and 2 PyrD type B subunits. Requires FMN as cofactor.

It is found in the cytoplasm. It catalyses the reaction (S)-dihydroorotate + NAD(+) = orotate + NADH + H(+). It functions in the pathway pyrimidine metabolism; UMP biosynthesis via de novo pathway; orotate from (S)-dihydroorotate (NAD(+) route): step 1/1. Its function is as follows. Catalyzes the conversion of dihydroorotate to orotate with NAD(+) as electron acceptor. In Geobacter metallireducens (strain ATCC 53774 / DSM 7210 / GS-15), this protein is Dihydroorotate dehydrogenase B (NAD(+)), catalytic subunit (pyrD).